The primary structure comprises 160 residues: Nucleotide-binding protein MADE_1020535 (160 aa).

It belongs to the YajQ family.

Its function is as follows. Nucleotide-binding protein. The polypeptide is Nucleotide-binding protein MADE_1020535 (Alteromonas mediterranea (strain DSM 17117 / CIP 110805 / LMG 28347 / Deep ecotype)).